Here is a 474-residue protein sequence, read N- to C-terminus: Methylenetetrahydrofolate--tRNA-(uracil-5-)-methyltransferase TrmFO (474 aa).

Residue 13 to 18 participates in FAD binding; that stretch reads GGGLAG.

Belongs to the MnmG family. TrmFO subfamily. It depends on FAD as a cofactor.

Its subcellular location is the cytoplasm. It carries out the reaction uridine(54) in tRNA + (6R)-5,10-methylene-5,6,7,8-tetrahydrofolate + NADH + H(+) = 5-methyluridine(54) in tRNA + (6S)-5,6,7,8-tetrahydrofolate + NAD(+). It catalyses the reaction uridine(54) in tRNA + (6R)-5,10-methylene-5,6,7,8-tetrahydrofolate + NADPH + H(+) = 5-methyluridine(54) in tRNA + (6S)-5,6,7,8-tetrahydrofolate + NADP(+). In terms of biological role, catalyzes the folate-dependent formation of 5-methyl-uridine at position 54 (M-5-U54) in all tRNAs. In Bartonella tribocorum (strain CIP 105476 / IBS 506), this protein is Methylenetetrahydrofolate--tRNA-(uracil-5-)-methyltransferase TrmFO.